The following is a 249-amino-acid chain: Proteasome subunit alpha (249 aa).

This sequence belongs to the peptidase T1A family. In terms of assembly, the 20S proteasome core is composed of 14 alpha and 14 beta subunits that assemble into four stacked heptameric rings, resulting in a barrel-shaped structure. The two inner rings, each composed of seven catalytic beta subunits, are sandwiched by two outer rings, each composed of seven alpha subunits. The catalytic chamber with the active sites is on the inside of the barrel. Has a gated structure, the ends of the cylinder being occluded by the N-termini of the alpha-subunits. Is capped at one or both ends by the proteasome regulatory ATPase, PAN.

It localises to the cytoplasm. Its activity is regulated as follows. The formation of the proteasomal ATPase PAN-20S proteasome complex, via the docking of the C-termini of PAN into the intersubunit pockets in the alpha-rings, triggers opening of the gate for substrate entry. Interconversion between the open-gate and close-gate conformations leads to a dynamic regulation of the 20S proteasome proteolysis activity. Component of the proteasome core, a large protease complex with broad specificity involved in protein degradation. The sequence is that of Proteasome subunit alpha from Methanosarcina mazei (strain ATCC BAA-159 / DSM 3647 / Goe1 / Go1 / JCM 11833 / OCM 88) (Methanosarcina frisia).